The sequence spans 569 residues: Peroxynitrite isomerase THAP4 (569 aa).

Residues 1–85 form a THAP-type zinc finger; the sequence is MVICCAAVNC…LKPTAVPSIF (85 aa). Residues 83–219 are disordered; the sequence is SIFHLSEKKR…GISMDDFTPP (137 aa). A compositionally biased stretch (polar residues) spans 121 to 130; that stretch reads IGSSLSSSDN. Serine 159 is modified (phosphoserine). Low complexity predominate over residues 196-210; it reads ASSSAADAGGADKSG. Positions 230–233 match the HCFC1-binding motif (HBM) motif; sequence LHSY. A Phosphoserine modification is found at serine 234. The tract at residues 235 to 312 is disordered; it reads FSSKHTRERP…EAVQSEHSDA (78 aa). Residues 242–262 are compositionally biased toward basic and acidic residues; sequence ERPSVPREPMDRKRLKRDIEP. The span at 265-279 shows a compositional bias: polar residues; the sequence is SGNSVAQSPPSSSLT. Positions 280–289 are enriched in low complexity; it reads ATPQKASQSP. Positions 407–569 are nitrobindin; that stretch reads PPKLNPVVEP…LHITYKKVTP (163 aa). 2 residues coordinate heme b: threonine 436 and histidine 559.

It in the C-terminal section; belongs to the nitrobindin family. In terms of assembly, homodimer. The cofactor is heme b.

The protein resides in the cytoplasm. Its subcellular location is the nucleus. It catalyses the reaction peroxynitrite = nitrate. It functions in the pathway nitrogen metabolism. Functionally, heme-binding protein able to scavenge peroxynitrite and to protect free L-tyrosine against peroxynitrite-mediated nitration, by acting as a peroxynitrite isomerase that converts peroxynitrite to nitrate. Therefore, this protein likely plays a role in peroxynitrite sensing and in the detoxification of reactive nitrogen and oxygen species (RNS and ROS, respectively). Is able to bind nitric oxide (NO) in vitro, but may act as a sensor of peroxynitrite levels in vivo, possibly modulating the transcriptional activity residing in the N-terminal region. The protein is Peroxynitrite isomerase THAP4 of Rattus norvegicus (Rat).